The primary structure comprises 255 residues: Hemin import ATP-binding protein HmuV (255 aa).

One can recognise an ABC transporter domain in the interval 2–238 (LQVEGLYLCR…AALKAVYGID (237 aa)). Position 34-41 (34-41 (GPNGAGKS)) interacts with ATP.

The protein belongs to the ABC transporter superfamily. Heme (hemin) importer (TC 3.A.1.14.5) family. As to quaternary structure, the complex is composed of two ATP-binding proteins (HmuV), two transmembrane proteins (HmuU) and a solute-binding protein (HmuT).

It localises to the cell inner membrane. Functionally, part of the ABC transporter complex HmuTUV involved in hemin import. Responsible for energy coupling to the transport system. The polypeptide is Hemin import ATP-binding protein HmuV (Pseudomonas putida (strain ATCC 47054 / DSM 6125 / CFBP 8728 / NCIMB 11950 / KT2440)).